The sequence spans 204 residues: NAD(P)H dehydrogenase (quinone) (204 aa).

In terms of domain architecture, Flavodoxin-like spans 4-195; the sequence is IQIVFYSMYG…AIARFQGAHV (192 aa). FMN-binding positions include 10–15 and 83–85; these read SMYGHI and TRF. Y12 provides a ligand contact to NAD(+). Substrate is bound at residue W103. FMN-binding positions include 118–124 and H139; that span reads STATQHG.

This sequence belongs to the WrbA family. The cofactor is FMN.

The catalysed reaction is a quinone + NADH + H(+) = a quinol + NAD(+). It catalyses the reaction a quinone + NADPH + H(+) = a quinol + NADP(+). In Trichlorobacter lovleyi (strain ATCC BAA-1151 / DSM 17278 / SZ) (Geobacter lovleyi), this protein is NAD(P)H dehydrogenase (quinone).